A 418-amino-acid chain; its full sequence is Glutamyl-tRNA reductase (418 aa).

Substrate is bound by residues 49 to 52 (TCNR), Ser109, 114 to 116 (EPQ), and Gln120. The active-site Nucleophile is Cys50. An NADP(+)-binding site is contributed by 189–194 (GAGETI).

Belongs to the glutamyl-tRNA reductase family. Homodimer.

The enzyme catalyses (S)-4-amino-5-oxopentanoate + tRNA(Glu) + NADP(+) = L-glutamyl-tRNA(Glu) + NADPH + H(+). It participates in porphyrin-containing compound metabolism; protoporphyrin-IX biosynthesis; 5-aminolevulinate from L-glutamyl-tRNA(Glu): step 1/2. In terms of biological role, catalyzes the NADPH-dependent reduction of glutamyl-tRNA(Glu) to glutamate 1-semialdehyde (GSA). In Escherichia coli O7:K1 (strain IAI39 / ExPEC), this protein is Glutamyl-tRNA reductase.